The following is a 434-amino-acid chain: Chaperone SurA (434 aa).

The first 22 residues, 1-22 (MKKWKSSLLGIAIWSLAASSMA), serve as a signal peptide directing secretion. 2 consecutive PpiC domains span residues 173–274 (TVQF…KVND) and 283–383 (VTEV…EVLD).

Its subcellular location is the periplasm. It catalyses the reaction [protein]-peptidylproline (omega=180) = [protein]-peptidylproline (omega=0). Chaperone involved in the correct folding and assembly of outer membrane proteins. Recognizes specific patterns of aromatic residues and the orientation of their side chains, which are found more frequently in integral outer membrane proteins. May act in both early periplasmic and late outer membrane-associated steps of protein maturation. This Photobacterium profundum (strain SS9) protein is Chaperone SurA.